The following is a 342-amino-acid chain: DNA-directed RNA polymerase subunit alpha (342 aa).

The segment at M1 to D238 is alpha N-terminal domain (alpha-NTD). An alpha C-terminal domain (alpha-CTD) region spans residues F254–I342.

The protein belongs to the RNA polymerase alpha chain family. In terms of assembly, homodimer. The RNAP catalytic core consists of 2 alpha, 1 beta, 1 beta' and 1 omega subunit. When a sigma factor is associated with the core the holoenzyme is formed, which can initiate transcription.

The enzyme catalyses RNA(n) + a ribonucleoside 5'-triphosphate = RNA(n+1) + diphosphate. In terms of biological role, DNA-dependent RNA polymerase catalyzes the transcription of DNA into RNA using the four ribonucleoside triphosphates as substrates. This chain is DNA-directed RNA polymerase subunit alpha, found in Pelagibacter ubique (strain HTCC1062).